The primary structure comprises 149 residues: Arginine repressor (149 aa).

This sequence belongs to the ArgR family.

The protein resides in the cytoplasm. It functions in the pathway amino-acid biosynthesis; L-arginine biosynthesis [regulation]. Regulates arginine biosynthesis genes. The chain is Arginine repressor from Exiguobacterium sibiricum (strain DSM 17290 / CCUG 55495 / CIP 109462 / JCM 13490 / 255-15).